A 116-amino-acid chain; its full sequence is uncharacterized protein (116 aa).

2 helical membrane-spanning segments follow: residues 40-60 (AIVK…IGIL) and 72-92 (FLGS…VVPI).

Its subcellular location is the membrane. This is an uncharacterized protein from Saccharomyces cerevisiae (strain ATCC 204508 / S288c) (Baker's yeast).